We begin with the raw amino-acid sequence, 353 residues long: Fe(3+) ions import ATP-binding protein FbpC (353 aa).

The ABC transporter domain maps to 9–239 (VTFENVTKKF…PASAFIADFM (231 aa)). Position 41-48 (41-48 (GPSGCGKT)) interacts with ATP.

The protein belongs to the ABC transporter superfamily. Fe(3+) ion importer (TC 3.A.1.10) family. As to quaternary structure, the complex is composed of two ATP-binding proteins (FbpC), two transmembrane proteins (FbpB) and a solute-binding protein (FbpA).

The protein resides in the cell inner membrane. It catalyses the reaction Fe(3+)(out) + ATP + H2O = Fe(3+)(in) + ADP + phosphate + H(+). In terms of biological role, part of the ABC transporter complex FbpABC involved in Fe(3+) ions import. Responsible for energy coupling to the transport system. This Brucella abortus (strain 2308) protein is Fe(3+) ions import ATP-binding protein FbpC.